A 199-amino-acid polypeptide reads, in one-letter code: Glycerol-3-phosphate acyltransferase (199 aa).

5 helical membrane-spanning segments follow: residues 5–25 (VLTIVIIVGAYLAGSVSSAVL), 56–76 (SAALVLFCDMLKGAAPAYLAF), 83–103 (IALGVIAIAACLGHIFPIFFG), 118–138 (APIGHDLALCLLASWIVLVLV), and 141–161 (YSSFAAICTALLAPVYTWWLD).

The protein belongs to the PlsY family. Probably interacts with PlsX.

It is found in the cell inner membrane. The enzyme catalyses an acyl phosphate + sn-glycerol 3-phosphate = a 1-acyl-sn-glycero-3-phosphate + phosphate. The protein operates within lipid metabolism; phospholipid metabolism. Catalyzes the transfer of an acyl group from acyl-phosphate (acyl-PO(4)) to glycerol-3-phosphate (G3P) to form lysophosphatidic acid (LPA). This enzyme utilizes acyl-phosphate as fatty acyl donor, but not acyl-CoA or acyl-ACP. The chain is Glycerol-3-phosphate acyltransferase from Shewanella halifaxensis (strain HAW-EB4).